The sequence spans 752 residues: Sialidase 85-1.1 (752 aa).

Residues 1 to 23 (MSRRVFASAVLLLIVVTMCCGGA) form the signal peptide. 2 BNR repeats span residues 274–285 (IYSKDNGSTWSL) and 319–330 (YVSRDMGTTWTE). The tract at residues 693-725 (APEPQVKIAPKPAAPAAPAGNEETARETGDGGA) is disordered. Residues 701–711 (APKPAAPAAPA) are compositionally biased toward low complexity.

It belongs to the glycosyl hydrolase 33 family.

The catalysed reaction is Hydrolysis of alpha-(2-&gt;3)-, alpha-(2-&gt;6)-, alpha-(2-&gt;8)- glycosidic linkages of terminal sialic acid residues in oligosaccharides, glycoproteins, glycolipids, colominic acid and synthetic substrates.. Developmentally regulated neuraminidase implicated in parasite invasion of cells. May contribute to the pathology during T.cruzi infection by cleaving sialic acid from cells of the immune system. This is Sialidase 85-1.1 (SA85-1.1) from Trypanosoma cruzi.